Here is a 350-residue protein sequence, read N- to C-terminus: tRNA uridine(34) hydroxylase (350 aa).

In terms of domain architecture, Rhodanese spans 146–240 (DDPDAIFIDM…YARRAREQGL (95 aa)). C200 functions as the Cysteine persulfide intermediate in the catalytic mechanism. Positions 318-350 (QRRRRAGREKGNKIFNKSRGRLNSKLGIPDPTE) are disordered.

This sequence belongs to the TrhO family.

It carries out the reaction uridine(34) in tRNA + AH2 + O2 = 5-hydroxyuridine(34) in tRNA + A + H2O. Catalyzes oxygen-dependent 5-hydroxyuridine (ho5U) modification at position 34 in tRNAs. This is tRNA uridine(34) hydroxylase from Salmonella arizonae (strain ATCC BAA-731 / CDC346-86 / RSK2980).